A 1109-amino-acid chain; its full sequence is Protein phosphatase 1 regulatory subunit 3A (1109 aa).

Phosphoserine; by GSK3 is present on residues S40 and S44. A Phosphoserine; by PKA and ISPK modification is found at S48. The residue at position 51 (S51) is a Phosphoserine. T58 is modified (phosphothreonine). The PP1-binding motif signature appears at 64-67 (RRVS). S67 is subject to Phosphoserine; by PKA. Residues 124–232 (QLQVQKAMLE…NNNGTNYTLV (109 aa)) enclose the CBM21 domain. Over residues 236-251 (KEPEPEPGKPLEEAPS) the composition is skewed to basic and acidic residues. Disordered regions lie at residues 236–278 (KEPE…NFEN), 340–424 (GKNT…SDGS), 436–455 (DDNA…CSFP), and 493–517 (YFKK…KEKR). Polar residues-rich tracts occupy residues 340–352 (GKNT…SNIP), 360–384 (KNQS…SAES), and 396–406 (YSSGNESSHQP). A Phosphoserine modification is found at S843. Disordered stretches follow at residues 945–985 (SATE…RKEK) and 1011–1048 (SREN…ETQD). Over residues 951–963 (YNCSPTRETQGQP) the composition is skewed to polar residues. 2 stretches are compositionally biased toward basic and acidic residues: residues 966 to 985 (KPEE…RKEK) and 1011 to 1034 (SREN…KEFE). The segment covering 1035–1048 (SSASSSLPVQETQD) has biased composition (polar residues). Residues 1066-1086 (FLLFLMFLVTVYHYDLMIGLA) form a helical membrane-spanning segment.

As to quaternary structure, interacts with PPP1CC catalytic subunit of PP1, and associates with glycogen. Phosphorylation at Ser-48 by ISPK stimulates the dephosphorylation of glycogen synthase and phosphorylase kinase. In terms of tissue distribution, skeletal muscle, diaphragm and cardiac muscle.

It localises to the membrane. In terms of biological role, seems to act as a glycogen-targeting subunit for PP1. PP1 is essential for cell division, and participates in the regulation of glycogen metabolism, muscle contractility and protein synthesis. Plays an important role in glycogen synthesis but is not essential for insulin activation of glycogen synthase. This Oryctolagus cuniculus (Rabbit) protein is Protein phosphatase 1 regulatory subunit 3A (PPP1R3A).